A 120-amino-acid chain; its full sequence is Dihydroneopterin aldolase (120 aa).

Substrate-binding positions include E21, Y53, and 72–73; that span reads VE. Residue K99 is the Proton donor/acceptor of the active site.

It belongs to the DHNA family.

The enzyme catalyses 7,8-dihydroneopterin = 6-hydroxymethyl-7,8-dihydropterin + glycolaldehyde. It functions in the pathway cofactor biosynthesis; tetrahydrofolate biosynthesis; 2-amino-4-hydroxy-6-hydroxymethyl-7,8-dihydropteridine diphosphate from 7,8-dihydroneopterin triphosphate: step 3/4. Catalyzes the conversion of 7,8-dihydroneopterin to 6-hydroxymethyl-7,8-dihydropterin. This chain is Dihydroneopterin aldolase (folB), found in Bacillus subtilis (strain 168).